A 161-amino-acid chain; its full sequence is Protein-lysine N-methyltransferase (161 aa).

The DxGxGxG SAM-binding motif motif lies at 34–40 (DLGCGDG).

It belongs to the class I-like SAM-binding methyltransferase superfamily. In terms of assembly, monomer.

The enzyme catalyses L-lysyl-[protein] + S-adenosyl-L-methionine = N(6)-methyl-L-lysyl-[protein] + S-adenosyl-L-homocysteine + H(+). In terms of biological role, catalyzes the methylation of lysine residues in target proteins, using S-adenosyl-L-methionine (SAM) as the methyl donor. Exhibits broad substrate specificity, being able to methylate the crenarchaeal chromatin protein Cren7 primarily at 'Lys-11', 'Lys-16' and 'Lys-31', as well as a number of recombinant Sulfolobus proteins in vitro. Methylates lysine residues in a rather sequence-independent manner. The protein is Protein-lysine N-methyltransferase of Saccharolobus islandicus (strain REY15A) (Sulfolobus islandicus).